The chain runs to 1273 residues: Receptor-type tyrosine-protein phosphatase C (1273 aa).

The first 23 residues, 1 to 23, serve as a signal peptide directing secretion; sequence MYLWLKLLAFSLALLGPEVFVTG. The Extracellular segment spans residues 24–546; it reads QGTTDDGLDT…KPQSTSYNSK (523 aa). Residues 45 to 192 are disordered; it reads LPARTTEFTP…TEIATPQTKP (148 aa). 3 stretches are compositionally biased toward polar residues: residues 50-77, 84-111, and 141-192; these read TEFT…SSTL, QPDS…TLTA, and RNST…QTKP. N-linked (GlcNAc...) asparagine glycosylation is present at Asn62. N-linked (GlcNAc...) asparagine glycosylation is found at Asn142, Asn153, Asn164, Asn178, Asn200, Asn245, Asn250, Asn271, Asn282, Asn327, Asn333, Asn371, Asn374, Asn471, and Asn502. Fibronectin type-III domains are found at residues 361-452 and 453-545; these read PEML…TKAA and RPGK…SYNS. A helical membrane pass occupies residues 547-567; the sequence is ALIIFLVFLIIVTSIALLVVL. Residues 568 to 1273 lie on the Cytoplasmic side of the membrane; it reads YKIYDLRKKR…PMSPALTPSS (706 aa). Tyrosine-protein phosphatase domains lie at 622–881 and 913–1196; these read FLAE…LVEY and LEAE…MASI. Phosphotyrosine is present on Tyr652. Substrate-binding positions include Asp790, 822-828, and Gln866; that span reads CSAGVGR. Cys822 functions as the Phosphocysteine intermediate in the catalytic mechanism. Phosphoserine occurs at positions 944, 963, 966, 970, 973, 974, and 978. The disordered stretch occupies residues 960-984; it reads LEMSKESEAESDESSDEDSDSEETS. A compositionally biased stretch (acidic residues) spans 968-981; sequence AESDESSDEDSDSE. Cys1137 (phosphocysteine intermediate) is an active-site residue. Ser1209 and Ser1266 each carry phosphoserine. The tract at residues 1219-1273 is disordered; it reads VDGAKQDANCVQPADPLNKAQEDSKEVGASEPASGSEEPEHSANGPMSPALTPSS.

The protein belongs to the protein-tyrosine phosphatase family. Receptor class 1/6 subfamily. Interacts with SKAP1. Interacts with DPP4; the interaction is enhanced in an interleukin-12-dependent manner in activated lymphocytes. Binds GANAB and PRKCSH. Interacts with CD53; this interaction stabilizes PTPRC on the membrane and is required for optimal phosphatase activity. Interacts with CLEC10A. Post-translationally, heavily N- and O-glycosylated. In terms of processing, the cytoplasmic domain contains potential phosphorylation sites. In terms of tissue distribution, isoform 1 and isoform 2 are found in thymocyte and lymph node. Isoform 4 and isoform 3 are found in the lymph nod.

It localises to the cell membrane. It is found in the membrane raft. The protein localises to the synapse. It catalyses the reaction O-phospho-L-tyrosyl-[protein] + H2O = L-tyrosyl-[protein] + phosphate. Protein tyrosine-protein phosphatase required for T-cell activation through the antigen receptor. Acts as a positive regulator of T-cell coactivation upon binding to DPP4. The first PTPase domain has enzymatic activity, while the second one seems to affect the substrate specificity of the first one. Upon T-cell activation, recruits and dephosphorylates SKAP1 and FYN. Dephosphorylates LYN, and thereby modulates LYN activity. Interacts with CLEC10A at antigen presenting cell-T cell contact; CLEC10A on immature dendritic cells recognizes Tn antigen-carrying PTPRC/CD45 receptor on effector T cells and modulates T cell activation threshold to limit autoreactivity. The chain is Receptor-type tyrosine-protein phosphatase C (Ptprc) from Rattus norvegicus (Rat).